We begin with the raw amino-acid sequence, 107 residues long: Insulin-like peptide 6 (107 aa).

The N-terminal stretch at 1 to 33 is a signal peptide; that stretch reads MVLKVPTSKVLLVLATLFAVAAMISSWMPQVAA. Cystine bridges form between Cys-48–Cys-91, Cys-60–Cys-105, and Cys-90–Cys-96. Positions 67–76 are cleaved as a propeptide — connecting peptide; that stretch reads LGDVFPNSFG.

The protein belongs to the insulin family. In terms of assembly, heterodimer of a B chain and an A chain linked by two disulfide bonds. Expressed at a low level in the larval gut.

The protein localises to the secreted. Possible ligand of InR/insulin-like receptor. The sequence is that of Insulin-like peptide 6 from Drosophila melanogaster (Fruit fly).